Here is a 756-residue protein sequence, read N- to C-terminus: Polyribonucleotide nucleotidyltransferase (756 aa).

Mg(2+)-binding residues include Asp532 and Asp538. Residues 598-657 (PRVTAIKVPVDKIGEVIGPKGKMINSITEQTGANISIEDDGTVFVGATDGPSAQAAIDMI) form the KH domain. One can recognise an S1 motif domain in the interval 669 to 738 (GERFLGTVVK…ARGKISLIPV (70 aa)).

It belongs to the polyribonucleotide nucleotidyltransferase family. It depends on Mg(2+) as a cofactor.

The protein localises to the cytoplasm. It catalyses the reaction RNA(n+1) + phosphate = RNA(n) + a ribonucleoside 5'-diphosphate. Functionally, involved in mRNA degradation. Catalyzes the phosphorolysis of single-stranded polyribonucleotides processively in the 3'- to 5'-direction. This chain is Polyribonucleotide nucleotidyltransferase, found in Rhodococcus erythropolis (strain PR4 / NBRC 100887).